The sequence spans 138 residues: Large ribosomal subunit protein bL19 (138 aa).

Belongs to the bacterial ribosomal protein bL19 family.

This protein is located at the 30S-50S ribosomal subunit interface and may play a role in the structure and function of the aminoacyl-tRNA binding site. This chain is Large ribosomal subunit protein bL19, found in Rickettsia canadensis (strain McKiel).